Here is a 224-residue protein sequence, read N- to C-terminus: Transcription factor MYB1 (224 aa).

2 HTH myb-type domains span residues 10–66 (LGRV…KPSI) and 67–117 (KRGH…YKKH). DNA-binding regions (H-T-H motif) lie at residues 38 to 62 (WKRVPERAGLNRCRKSCRWRWLNYL) and 90 to 113 (WSLIAAKLPGRTINDVKNYCNTHL).

The protein resides in the nucleus. Its function is as follows. Activates DODA1 and CYP76AD1 in the betalain red pigment pathway. This chain is Transcription factor MYB1, found in Beta vulgaris (Sugar beet).